The primary structure comprises 221 residues: MSSQPKLRILCLHGYRQCDQSFRQKTGSTRKLVKSLAEFEFVNGVHSVAVDEHVDSSRAWWFSNNEAMSFSSRESTEVAVGFEESVAAVVKFIEENGPFDGLLGFSQGASMVHLLIAKAQLGEIKLPGIRFAIFFSGFLSLSSKHDSLTLLRIKEFPSMHVFGDADEIVARPKSEKMADMFDVEPLRIAHDGGHVVPSMSKHKEKIAGFMREQLDRKIENN.

Active-site charge relay system residues include Ser106, Asp166, and His194.

Belongs to the LovG family.

The chain is Esterase C25G4.2 from Caenorhabditis elegans.